The sequence spans 239 residues: Small ribosomal subunit protein uS3c (239 aa).

The region spanning 43-139 (IKNYIQKNRK…RLNIGIEKVK (97 aa)) is the KH type-2 domain.

This sequence belongs to the universal ribosomal protein uS3 family. In terms of assembly, part of the 30S ribosomal subunit.

It localises to the plastid. The protein resides in the chloroplast. The sequence is that of Small ribosomal subunit protein uS3c (rps3) from Oryza nivara (Indian wild rice).